A 213-amino-acid polypeptide reads, in one-letter code: 3-isopropylmalate dehydratase small subunit (213 aa).

This sequence belongs to the LeuD family. LeuD type 1 subfamily. As to quaternary structure, heterodimer of LeuC and LeuD.

The catalysed reaction is (2R,3S)-3-isopropylmalate = (2S)-2-isopropylmalate. Its pathway is amino-acid biosynthesis; L-leucine biosynthesis; L-leucine from 3-methyl-2-oxobutanoate: step 2/4. Functionally, catalyzes the isomerization between 2-isopropylmalate and 3-isopropylmalate, via the formation of 2-isopropylmaleate. The polypeptide is 3-isopropylmalate dehydratase small subunit (Pseudomonas savastanoi pv. phaseolicola (strain 1448A / Race 6) (Pseudomonas syringae pv. phaseolicola (strain 1448A / Race 6))).